Here is a 174-residue protein sequence, read N- to C-terminus: Larval cuticle protein LCP-22 (174 aa).

The signal sequence occupies residues 1-16 (MKFAVVFACMVAAVAA). The Chitin-binding type R&amp;R domain maps to 82–153 (DGSYTYFYET…PTGNAIPTSP (72 aa)).

Component of the cuticle of the larva of Bombyx mori. The protein is Larval cuticle protein LCP-22 (LCP22) of Bombyx mori (Silk moth).